Consider the following 98-residue polypeptide: Omega-hexatoxin-Hr2b (98 aa).

Residues 1–22 (MKFSKLSLTLALILTQVLFVLC) form the signal peptide. A propeptide spanning residues 24–56 (KINEDFMKHGLESQALHDEIRKPIDSENPDTER) is cleaved from the precursor. Intrachain disulfides connect cysteine 60–cysteine 74, cysteine 67–cysteine 80, and cysteine 73–cysteine 85. Position 97 is a leucine amide (leucine 97).

Belongs to the neurotoxin 15 family. 02 (omega-actx) subfamily. In terms of tissue distribution, expressed by the venom gland.

It is found in the secreted. Its function is as follows. Potent inhibitor of insect, but not mammalian, voltage-gated calcium channels (Cav). The polypeptide is Omega-hexatoxin-Hr2b (Atrax robustus (Sydney funnel-web spider)).